The sequence spans 478 residues: Probable cytosol aminopeptidase (478 aa).

Mn(2+) contacts are provided by Lys244 and Asp249. Lys256 is an active-site residue. 3 residues coordinate Mn(2+): Asp267, Asp326, and Glu328. Arg330 is an active-site residue.

This sequence belongs to the peptidase M17 family. It depends on Mn(2+) as a cofactor.

Its subcellular location is the cytoplasm. The enzyme catalyses Release of an N-terminal amino acid, Xaa-|-Yaa-, in which Xaa is preferably Leu, but may be other amino acids including Pro although not Arg or Lys, and Yaa may be Pro. Amino acid amides and methyl esters are also readily hydrolyzed, but rates on arylamides are exceedingly low.. It catalyses the reaction Release of an N-terminal amino acid, preferentially leucine, but not glutamic or aspartic acids.. Presumably involved in the processing and regular turnover of intracellular proteins. Catalyzes the removal of unsubstituted N-terminal amino acids from various peptides. In Fusobacterium nucleatum subsp. nucleatum (strain ATCC 25586 / DSM 15643 / BCRC 10681 / CIP 101130 / JCM 8532 / KCTC 2640 / LMG 13131 / VPI 4355), this protein is Probable cytosol aminopeptidase.